The primary structure comprises 489 residues: Inactive receptor-like serine/threonine-protein kinase At2g40270 (489 aa).

The signal sequence occupies residues 1–23 (MLFKMRSFVAFVLLLSWFGSCCS). The Extracellular segment spans residues 24 to 139 (LKDQAVDFLK…PRNSHSSVPL (116 aa)). The tract at residues 67–130 (KDLPSRKDRK…SAPLANSPIP (64 aa)) is disordered. Over residues 81–90 (AATTTPSSSP) the composition is skewed to low complexity. Polar residues predominate over residues 99–116 (TKASTVSEPQKRSSTQDV). The segment covering 117–130 (SPSPSAPLANSPIP) has biased composition (low complexity). The chain crosses the membrane as a helical span at residues 140-160 (VVGCVGGAFFLLLVATGLYFF). At 161 to 489 (TSKAGKTVNP…WAELEVLSTA (329 aa)) the chain is on the cytoplasmic side. In terms of domain architecture, Protein kinase spans 200–460 (EDFSNVIGSC…PTMQEVTGWL (261 aa)).

This sequence belongs to the protein kinase superfamily. Ser/Thr protein kinase family.

The protein resides in the cell membrane. This chain is Inactive receptor-like serine/threonine-protein kinase At2g40270, found in Arabidopsis thaliana (Mouse-ear cress).